Here is a 298-residue protein sequence, read N- to C-terminus: Oxygen-dependent coproporphyrinogen-III oxidase (298 aa).

A substrate-binding site is contributed by Ser-92. A divalent metal cation is bound by residues His-96 and His-106. The Proton donor role is filled by His-106. 108–110 is a binding site for substrate; sequence NVR. Residues His-145 and His-175 each coordinate a divalent metal cation. The segment at 239 to 274 is important for dimerization; sequence YVEFNLVYDRGTLFGLQSGGRSESILMSLPPRVRWE. Substrate is bound at residue 257 to 259; sequence GGR.

This sequence belongs to the aerobic coproporphyrinogen-III oxidase family. As to quaternary structure, homodimer. A divalent metal cation is required as a cofactor.

The protein resides in the cytoplasm. It catalyses the reaction coproporphyrinogen III + O2 + 2 H(+) = protoporphyrinogen IX + 2 CO2 + 2 H2O. The protein operates within porphyrin-containing compound metabolism; protoporphyrin-IX biosynthesis; protoporphyrinogen-IX from coproporphyrinogen-III (O2 route): step 1/1. Involved in the heme biosynthesis. Catalyzes the aerobic oxidative decarboxylation of propionate groups of rings A and B of coproporphyrinogen-III to yield the vinyl groups in protoporphyrinogen-IX. The chain is Oxygen-dependent coproporphyrinogen-III oxidase from Stenotrophomonas maltophilia (strain R551-3).